The following is a 1031-amino-acid chain: Protein draper (1031 aa).

An N-terminal signal peptide occupies residues 1-16; that stretch reads MLPVILIACLAQLVLA. The Extracellular portion of the chain corresponds to 17 to 800; that stretch reads QADLKDLDGP…DQSENSSRAS (784 aa). In terms of domain architecture, EMI spans 25 to 100; that stretch reads GPNICKRREL…YIASAGECVP (76 aa). 6 cysteine pairs are disulfide-bonded: C29/C88, C55/C62, C87/C98, C102/C111, C106/C117, and C119/C128. N73 carries N-linked (GlcNAc...) asparagine glycosylation. EGF-like domains lie at 99 to 129, 137 to 172, 180 to 215, 223 to 258, 266 to 301, and 309 to 344; these read VPHC…PACD, YGRN…ARCA, FGAN…PLCD, HGAQ…DVCA, YGPG…ERCF, and YGFN…AKCA. N140 carries an N-linked (GlcNAc...) asparagine glycan. 3 cysteine pairs are disulfide-bonded: C141–C153, C147–C160, and C162–C171. Residue N183 is glycosylated (N-linked (GlcNAc...) asparagine). Disulfide bonds link C184-C196, C190-C203, C205-C214, C227-C239, C233-C246, C248-C257, C270-C282, C276-C289, and C291-C300. N312 carries an N-linked (GlcNAc...) asparagine glycan. Intrachain disulfides connect C313-C325, C319-C332, and C334-C343. N329 carries an N-linked (GlcNAc...) asparagine glycan. The N-linked (GlcNAc...) asparagine glycan is linked to N358. 2 consecutive EGF-like domains span residues 398 to 433 and 484 to 519; these read YGPN…PTCE and FGQD…ERCE. 6 disulfide bridges follow: C402–C414, C408–C421, C423–C432, C488–C500, C494–C507, and C509–C518. N-linked (GlcNAc...) asparagine glycosylation occurs at N418. N504 carries an N-linked (GlcNAc...) asparagine glycan. N-linked (GlcNAc...) asparagine glycans are attached at residues N540, N584, and N585. The EGF-like 9 domain maps to 572–607; it reads YGENCDKVCRCLNNSSCDPDSGNCICSAGWTGADCA. Disulfide bonds link C576–C588, C582–C595, and C597–C606. N630 is a glycosylation site (N-linked (GlcNAc...) asparagine). An EGF-like 10 domain is found at 660–695; that stretch reads YGPGCKLKCNCEHGGECNHVTGQCQCLPGWTGSNCN. Cystine bridges form between C664-C676, C670-C683, and C685-C694. Residues N695 and N795 are each glycosylated (N-linked (GlcNAc...) asparagine). Residues 801-821 form a helical membrane-spanning segment; that stretch reads VALTLVLMTLFACIIFAVFIY. Over 822–1031 the chain is Cytoplasmic; sequence YRRRVSNLKT…SPSSSPKFLK (210 aa). Residues 940-954 show a composition bias toward basic and acidic residues; that stretch reads KEGYKDPDEYDHLDY. 2 disordered regions span residues 940–964 and 989–1031; these read KEGY…QKPH and TVLL…KFLK. Residues 1009–1031 show a composition bias toward polar residues; sequence DNTNTNLDNVSTASPSSSPKFLK.

This sequence belongs to the MEGF family. In terms of assembly, interacts (via the cytoplasmic domain) with shark; this is required for the recruitment of drpr and glial cells to severed axons and for the phagocytosis of axonal debris by glial cells following axon injury. Interacts with ced-6. Interacts with csw; this results in dephosphorylation of drpr isoform A which is required for the inhibition of glial cell engulfment of axonal debris produced following axonal injury. Post-translationally, phosphorylated on tyrosine residues. Phosphorylation is induced by binding to prtp. It is also induced by binding to the membrane phospholipid phosphatidylserine. Phosphorylation may be mediated directly or indirectly by Src42a and is required for interaction with shark. In terms of processing, dephosphorylated by csw which is required for the inhibition of glial cell engulfment of axonal debris produced following axonal injury. In terms of tissue distribution, expressed in adult head (at protein level). Expressed in glia, macrophages and ectoderm (at protein level). Detected in glia around the mushroom body dorsal lobe and in glial processes infiltrating the medial lobe (at protein level). Expressed in adult brain glia including antennal lobe glia (at protein level). Expressed in the larval fat body (at protein level). Expressed in the ovary (at protein level). Isoform B: Predominant isoform in adult glia.

Its subcellular location is the cell membrane. The protein resides in the cell projection. It is found in the axon. The protein localises to the cytoplasm. It localises to the postsynaptic cell membrane. Its subcellular location is the cell cortex. The protein resides in the phagocytic cup. It is found in the cytoplasmic vesicle. The protein localises to the phagosome. In terms of biological role, receptor which is involved in the phagocytosis of a variety of cells including apoptotic cells, severed and pruned axons, degenerating dendrites, salivary gland cells, germline cells and bacteria. Binds to the ligand prtp which relocates from the endoplasmic reticulum to the cell surface during apoptosis. Ligand-binding may promote tyrosine phosphorylation mediated by Src42a, interaction with shark and subsequent activation of phagocytosis. Also binds to the membrane phospholipid phosphatidylserine which is exposed on the surface of apoptotic cells. Required for the phagocytosis of apoptotic cells by macrophages. Also required for the phagocytosis of apoptotic neurons by glial cells in the embryonic nervous system. Acts downstream of NimC4/simu in the glial phagocytosis of apoptotic neurons. Plays a role in the glial engulfment of larval axons as part of programmed axon pruning during metamorphosis. Also mediates glial cell clearance of severed axons following axonal injury. Required for the engulfment of degenerating dendrites by epidermal cells. Required in the ovary for the engulfment and subsequent processing of dying germline cells by follicular epithelial cells through activation of the JNK/bsk pathway. Plays a role in neuromuscular junction development by mediating the clearance of presynaptic debris and immature boutons which are shed by growing synapses. Required for larval salivary gland cell death which occurs following a rise in steroid levels after puparium formation. Also involved in bacterial phagocytosis. Required for hemocyte phagocytosis of the Gram-positive bacterium S.aureus. Lipoteichoic acid, synthesized by the S.aureus lipoteichoic acid synthase ltaS, acts as a ligand for drpr in this process. Together with Src42a and shark, promotes the migration of macrophages to sites of wounding as part of a signaling cascade where Scr42a detects production of hydrogen peroxide at wound sites which triggers phosphorylation of drpr and subsequent recruitment and activation of shark. Also required for macrophage priming which occurs following phagocytosis of apoptotic cells and ensures that macrophages develop a form of molecular memory that allows them to later mount an inflammatory response to tissue damage and bacterial infection. Is also an essential factor in the regulation of muscle development and myogenesis, and as a consequence is required for normal locomotion. Likely to control the balance between skeletal muscle satellite cells proliferation and differentiation through regulation of the notch signaling pathway. Its function is as follows. Promotes engulfment of axonal debris by glial cells following axonal injury. Potently inhibits glial cell engulfment of axonal debris produced following axonal injury. In Drosophila melanogaster (Fruit fly), this protein is Protein draper.